Reading from the N-terminus, the 385-residue chain is MALPHDSNETSYLLPPNNEDWDRQAIPDFVYGQKDLMAEGIQWPRNAPGVLEALPQSPFDAALCSAWKQRVELGLFRYRLRELQTQILPGVVGFVAQLNVERGVQRRRPQTIKSVRQAFDPEQFNFNKIQPGEVLYRLHREPDLPGTLLQEDILVVINVSPLEWGHVLLVPEPARGLPQRLLPGALRAGIEAVLLSLHPGFRVGFNSLGGLASVNHLHLHGYYLAHRLPVEQAPSEPLDPGGHLHLLQGLPAPGFLFYTRGPGLDLESLICRVCRATDYLTDHEIAHNLFVTRGAPPGKTSPSSALTGVRVILWARKSCFGIKDGEAFNVALCELAGHLPVKTSQDFSSLTEAAAVALIQDCRLPPSQAEEVQAALVALMSQKEQ.

The Tele-GMP-histidine intermediate role is filled by His218.

This sequence belongs to the GDPGP1 family.

The protein resides in the cytoplasm. It carries out the reaction GDP-alpha-D-glucose + phosphate = alpha-D-glucose 1-phosphate + GDP + H(+). In terms of biological role, specific and highly efficient GDP-D-glucose phosphorylase regulating the levels of GDP-D-glucose in cells. The polypeptide is GDP-D-glucose phosphorylase 1 (GDPGP1) (Macaca fascicularis (Crab-eating macaque)).